A 461-amino-acid polypeptide reads, in one-letter code: tRNA modification GTPase MnmE (461 aa).

(6S)-5-formyl-5,6,7,8-tetrahydrofolate contacts are provided by Arg27, Glu89, and Arg128. Residues 224 to 382 (GLATAIVGRP…LENAIEQLFF (159 aa)) enclose the TrmE-type G domain. Asn234 contacts K(+). GTP-binding positions include 234 to 239 (NVGKSS), 253 to 259 (TDIAGTT), and 278 to 281 (DTAG). Residue Ser238 participates in Mg(2+) binding. K(+)-binding residues include Thr253, Ile255, and Thr258. Position 259 (Thr259) interacts with Mg(2+). Lys461 is a binding site for (6S)-5-formyl-5,6,7,8-tetrahydrofolate.

Belongs to the TRAFAC class TrmE-Era-EngA-EngB-Septin-like GTPase superfamily. TrmE GTPase family. Homodimer. Heterotetramer of two MnmE and two MnmG subunits. It depends on K(+) as a cofactor.

The protein localises to the cytoplasm. Functionally, exhibits a very high intrinsic GTPase hydrolysis rate. Involved in the addition of a carboxymethylaminomethyl (cmnm) group at the wobble position (U34) of certain tRNAs, forming tRNA-cmnm(5)s(2)U34. The polypeptide is tRNA modification GTPase MnmE (Lactobacillus johnsonii (strain CNCM I-12250 / La1 / NCC 533)).